We begin with the raw amino-acid sequence, 214 residues long: MHTVKLLCVVFSCLCAVAWASSHRQPCHSPPLTSGTMKVVSTGGHDLASGEFSYDSKASKFRFVEDTHANKTSHMDVLIHFEEGTLYEIDSKNESCKKETLQFRKHLMEIPPDATHESEIYMGSPTVIEQGLRVRVWHGKLPELHAHYSLSTTSCGCLPVSGSFYGKKKDLLFSFFGVEPEVDDPQAFVPPAYCEGVSFEEAPDDHSFFDLFHD.

An N-terminal signal peptide occupies residues 1-20 (MHTVKLLCVVFSCLCAVAWA). 2 N-linked (GlcNAc...) asparagine glycosylation sites follow: N70 and N93.

It belongs to the ependymin family. In terms of assembly, forms disulfide-linked dimers. Binds calcium through the terminal sialic acids.

The protein resides in the secreted. May play a role in neural plasticity. May be involved during axon regeneration. In Notemigonus crysoleucas (Golden shiner), this protein is Ependymin (epd).